The primary structure comprises 247 residues: ATP synthase subunit a, chloroplastic (247 aa).

5 consecutive transmembrane segments (helical) span residues 38–58 (QVLITSWVVIAILLISTILVV), 95–115 (VPFIGTLFLFIFVSNWSGALL), 134–154 (INTTVALALLTSVAYFYAGIS), 199–219 (LVVVVLVSLVPLVIPIPVMFL), and 220–240 (GLFTSGIQALIFATLAAAYIG).

Belongs to the ATPase A chain family. F-type ATPases have 2 components, CF(1) - the catalytic core - and CF(0) - the membrane proton channel. CF(1) has five subunits: alpha(3), beta(3), gamma(1), delta(1), epsilon(1). CF(0) has four main subunits: a, b, b' and c.

It is found in the plastid. The protein localises to the chloroplast thylakoid membrane. Key component of the proton channel; it plays a direct role in the translocation of protons across the membrane. This chain is ATP synthase subunit a, chloroplastic, found in Cicer arietinum (Chickpea).